Here is a 1723-residue protein sequence, read N- to C-terminus: Probable outer membrane protein pmp20 (1723 aa).

The N-terminal stretch at 1-21 is a signal peptide; the sequence is MKWLPATAVFAAVLPALTAFG. Disordered regions lie at residues 78–100 and 139–161; these read VTPD…SGAT and LSSS…SASA. Composition is skewed to low complexity over residues 85–100 and 140–161; these read SSSN…SGAT and SSSS…SASA. An Autotransporter domain is found at 1434–1723; that stretch reads EDPAFNNFWA…MANGGIRFVF (290 aa).

Belongs to the PMP outer membrane protein family.

It localises to the secreted. The protein localises to the cell wall. The protein resides in the cell outer membrane. The chain is Probable outer membrane protein pmp20 (pmp20) from Chlamydia pneumoniae (Chlamydophila pneumoniae).